The following is a 203-amino-acid chain: ATP synthase subunit delta, chloroplastic (203 aa).

It belongs to the ATPase delta chain family. As to quaternary structure, F-type ATPases have 2 components, F(1) - the catalytic core - and F(0) - the membrane proton channel. F(1) has five subunits: alpha(3), beta(3), gamma(1), delta(1), epsilon(1). CF(0) has four main subunits: a(1), b(1), b'(1) and c(10-14). The alpha and beta chains form an alternating ring which encloses part of the gamma chain. F(1) is attached to F(0) by a central stalk formed by the gamma and epsilon chains, while a peripheral stalk is formed by the delta, b and b' chains.

Its subcellular location is the plastid. It is found in the chloroplast thylakoid membrane. Its function is as follows. F(1)F(0) ATP synthase produces ATP from ADP in the presence of a proton or sodium gradient. F-type ATPases consist of two structural domains, F(1) containing the extramembraneous catalytic core and F(0) containing the membrane proton channel, linked together by a central stalk and a peripheral stalk. During catalysis, ATP synthesis in the catalytic domain of F(1) is coupled via a rotary mechanism of the central stalk subunits to proton translocation. This protein is part of the stalk that links CF(0) to CF(1). It either transmits conformational changes from CF(0) to CF(1) or is implicated in proton conduction. The polypeptide is ATP synthase subunit delta, chloroplastic (Heterosigma akashiwo (strain NIES-293 / 8280G21-1)).